We begin with the raw amino-acid sequence, 377 residues long: Opsin, blue-sensitive (377 aa).

Residues 1–56 are Extracellular-facing; sequence MLLHNKTLAGKALAFIAEEGYVPSMREKFLGWNVPPEYSDLVHPHWRAFPAPGKHF. The N-linked (GlcNAc...) asparagine glycan is linked to Asn5. The chain crosses the membrane as a helical span at residues 57–81; it reads HIGLAIIYSMLLIMSLVGNCCVIWI. Residues 82 to 93 are Cytoplasmic-facing; it reads FSTSKSLRTPSN. Residues 94–119 form a helical membrane-spanning segment; the sequence is MFIVSLAIFDIIMAFEMPMLVISSFM. Over 120–132 the chain is Extracellular; it reads ERMIGWEIGCDVY. The cysteines at positions 129 and 206 are disulfide-linked. A helical membrane pass occupies residues 133–152; the sequence is SVFGSISGMGQAMTNAAIAF. The Cytoplasmic portion of the chain corresponds to 153-170; that stretch reads DRYRTISCPIDGRLNSKQ. The chain crosses the membrane as a helical span at residues 171–195; sequence AAVIIAFTWFWVTPFTVLPLLKVWG. The Extracellular segment spans residues 196 to 219; sequence RYTTEGFLTTCSFDFLTDDEDTKV. The helical transmembrane segment at 220 to 247 threads the bilayer; the sequence is FVTCIFIWAYVIPLIFIILFYSRLLSSI. Residues 248-282 lie on the Cytoplasmic side of the membrane; it reads RNHEKMLREQAKKMNVKSLVSNQDKERSAEVRIAK. A helical membrane pass occupies residues 283-306; it reads VAFTIFFLFLLAWTPYATVALIGV. Residues 307–314 are Extracellular-facing; the sequence is YGNRELLT. A helical membrane pass occupies residues 315-339; it reads PVSTMLPAVFAKTVSCIDPWIYAIN. The residue at position 326 (Lys326) is an N6-(retinylidene)lysine. Over 340–377 the chain is Cytoplasmic; it reads HPRYRQELQKRCKWMGIHEPETTSDATSAQTEKIKTDE.

It belongs to the G-protein coupled receptor 1 family. Opsin subfamily. Phosphorylated on some or all of the serine and threonine residues present in the C-terminal region. In terms of tissue distribution, expressed in the dorsal region of the retina and sparsely expressed in the ventral region.

The protein resides in the membrane. Visual pigments are the light-absorbing molecules that mediate vision. They consist of an apoprotein, opsin, covalently linked to 11-cis-retinal. This is Opsin, blue-sensitive (BLOP) from Apis mellifera (Honeybee).